The chain runs to 246 residues: Phosphonates import ATP-binding protein PhnC (246 aa).

Residues 2–246 enclose the ABC transporter domain; sequence IKFENVSKIY…ILDEVYRKEA (245 aa). 35–42 serves as a coordination point for ATP; it reads GTSGAGKS.

This sequence belongs to the ABC transporter superfamily. Phosphonates importer (TC 3.A.1.9.1) family. As to quaternary structure, the complex is composed of two ATP-binding proteins (PhnC), two transmembrane proteins (PhnE) and a solute-binding protein (PhnD).

It is found in the cell membrane. The enzyme catalyses phosphonate(out) + ATP + H2O = phosphonate(in) + ADP + phosphate + H(+). Functionally, part of the ABC transporter complex PhnCDE involved in phosphonates import. Responsible for energy coupling to the transport system. This chain is Phosphonates import ATP-binding protein PhnC, found in Lactococcus lactis subsp. lactis (strain IL1403) (Streptococcus lactis).